A 412-amino-acid polypeptide reads, in one-letter code: Keratin, type I microfibrillar 48 kDa, component 8C-1 (412 aa).

Ser1 carries the post-translational modification N-acetylserine. Positions 1–55 (SFNFCLPNLSFRSSCSSRPCVPSSCCGTTLPGACNIPANVGSCNWFCEGSFDGNE) are head. Residues 55 to 366 (EKETMQFLND…GLLDSEDCKL (312 aa)) enclose the IF rod domain. The tract at residues 56-90 (KETMQFLNDRLASYLEKVRQLERENAELESRILER) is coil 1A. The interval 91–101 (SQQQEPLVCPN) is linker 1. The segment at 102–202 (YQSYFRTIEE…HEEEVNTLRS (101 aa)) is coil 1B. Residues 203–218 (QLGDRLNVEVDAAPTV) are linker 12. The interval 219–362 (DLNRVLNETR…NTYRGLLDSE (144 aa)) is coil 2. The tract at residues 363–412 (DCKLPCNPCATTNACGKTITPCISSPCAPAAPCTPCVPRSRCGPCNSYVR) is tail.

The protein belongs to the intermediate filament family.

Wool microfibrillar keratin. The sequence is that of Keratin, type I microfibrillar 48 kDa, component 8C-1 from Ovis aries (Sheep).